A 136-amino-acid polypeptide reads, in one-letter code: S-protein homolog 17 (136 aa).

The first 22 residues, 1 to 22, serve as a signal peptide directing secretion; the sequence is MKNLSIFMFVFSLCMFGHVSRA.

It belongs to the plant self-incompatibility (S1) protein family.

Its subcellular location is the secreted. This Arabidopsis thaliana (Mouse-ear cress) protein is S-protein homolog 17.